We begin with the raw amino-acid sequence, 220 residues long: Large ribosomal subunit protein eL15 (220 aa).

Belongs to the eukaryotic ribosomal protein eL15 family.

The protein is Large ribosomal subunit protein eL15 of Staphylothermus marinus (strain ATCC 43588 / DSM 3639 / JCM 9404 / F1).